A 102-amino-acid chain; its full sequence is MRMGSLICTCSSSSKANTNARISDSSTWYHQPGQHISIQTFRELNPAPTSSPTSTRTVILGDGEHFRSMDDQPEGVNNLQTTLTPRHLTAAVNQRLLRSLEN.

It belongs to the geminiviridae protein AC4/C4 family.

Its function is as follows. Pathogenicity determinant. May act as a suppressor of RNA-mediated gene silencing, also known as post-transcriptional gene silencing (PTGS), a mechanism of plant viral defense that limits the accumulation of viral RNAs. The polypeptide is Protein AC4 (Indian cassava mosaic virus (ICMV)).